The following is a 385-amino-acid chain: Phosphorylated adapter RNA export protein (385 aa).

Residues M1–S18 are compositionally biased toward acidic residues. The disordered stretch occupies residues M1–P28. N-acetylalanine is present on A2. Residues A2–L320 are necessary for interaction with CBP80. A phosphoserine mark is found at S14, S16, S56, S57, S60, and S63. The Nuclear localization signal motif lies at K71–R74. The tract at residues Q75–G101 is disordered. The short motif at V120 to M129 is the Nuclear export signal element. Residues K164 to G184 are compositionally biased toward basic and acidic residues. The tract at residues K164–R192 is disordered. The Nuclear localization signal motif lies at K189 to R192. Residues E219–Q319 form a sufficient for poly U RNA-binding region. Residues G270–G278 are necessary for poly U RNA-binding and snRNA export. The residue at position 287 (T287) is a Phosphothreonine. The disordered stretch occupies residues Q335 to F385. The segment covering E343–A352 has biased composition (polar residues). A Phosphoserine modification is found at S347. A compositionally biased stretch (basic and acidic residues) spans G364 to F385.

This sequence belongs to the PHAX family. In terms of assembly, found in a U snRNA export complex with PHAX/RNUXA, NCBP1/CBP80, NCBP2/CBP20, RAN, XPO1 and m7G-capped RNA. Part of a precomplex with PHAX/RNUXA, NCBP1/CBP80, NCBP2/CBP20 and m7G-capped RNA. Interacts with NCBP1/CBP80. Found in a complex with snoRNA. Interacts with NCBP2/CBP20. Interacts with DDX39A; this interaction stimulates PHAX RNA binding activity. Post-translationally, phosphorylated in the nucleus. Dephosphorylated in the cytoplasm.

The protein localises to the nucleus. It is found in the nucleoplasm. Its subcellular location is the cajal body. It localises to the cytoplasm. Its function is as follows. A phosphoprotein adapter involved in the XPO1-mediated U snRNA export from the nucleus. Bridge components required for U snRNA export, the cap binding complex (CBC)-bound snRNA on the one hand and the GTPase Ran in its active GTP-bound form together with the export receptor XPO1 on the other. Its phosphorylation in the nucleus is required for U snRNA export complex assembly and export, while its dephosphorylation in the cytoplasm causes export complex disassembly. It is recycled back to the nucleus via the importin alpha/beta heterodimeric import receptor. The directionality of nuclear export is thought to be conferred by an asymmetric distribution of the GTP- and GDP-bound forms of Ran between the cytoplasm and nucleus. Its compartmentalized phosphorylation cycle may also contribute to the directionality of export. Binds strongly to m7G-capped U1 and U5 small nuclear RNAs (snRNAs) in a sequence-unspecific manner and phosphorylation-independent manner. Also plays a role in the biogenesis of U3 small nucleolar RNA (snoRNA). Involved in the U3 snoRNA transport from nucleoplasm to Cajal bodies. Binds strongly to m7G-capped U3, U8 and U13 precursor snoRNAs and weakly to trimethylated (TMG)-capped U3, U8 and U13 snoRNAs. Also binds to telomerase RNA. This chain is Phosphorylated adapter RNA export protein (Phax), found in Mus musculus (Mouse).